We begin with the raw amino-acid sequence, 463 residues long: L-seryl-tRNA(Sec) selenium transferase (463 aa).

Lysine 294 bears the N6-(pyridoxal phosphate)lysine mark.

This sequence belongs to the SelA family. Pyridoxal 5'-phosphate serves as cofactor.

The protein resides in the cytoplasm. The catalysed reaction is L-seryl-tRNA(Sec) + selenophosphate + H(+) = L-selenocysteinyl-tRNA(Sec) + phosphate. Its pathway is aminoacyl-tRNA biosynthesis; selenocysteinyl-tRNA(Sec) biosynthesis; selenocysteinyl-tRNA(Sec) from L-seryl-tRNA(Sec) (bacterial route): step 1/1. In terms of biological role, converts seryl-tRNA(Sec) to selenocysteinyl-tRNA(Sec) required for selenoprotein biosynthesis. The polypeptide is L-seryl-tRNA(Sec) selenium transferase (Hyphomonas neptunium (strain ATCC 15444)).